Consider the following 1379-residue polypeptide: DNA-directed RNA polymerase subunit beta (1379 aa).

This sequence belongs to the RNA polymerase beta chain family. The RNAP catalytic core consists of 2 alpha, 1 beta, 1 beta' and 1 omega subunit. When a sigma factor is associated with the core the holoenzyme is formed, which can initiate transcription.

It carries out the reaction RNA(n) + a ribonucleoside 5'-triphosphate = RNA(n+1) + diphosphate. Its function is as follows. DNA-dependent RNA polymerase catalyzes the transcription of DNA into RNA using the four ribonucleoside triphosphates as substrates. This is DNA-directed RNA polymerase subunit beta from Rhizobium leguminosarum bv. trifolii (strain WSM2304).